Reading from the N-terminus, the 242-residue chain is Mitochondrial intermembrane space import and assembly protein 40 (242 aa).

The N-terminal 18 residues, 1-18, are a transit peptide targeting the mitochondrion; the sequence is MFARSFSNASRTIARRSL. Residues 1–22 show a composition bias toward polar residues; sequence MFARSFSNASRTIARRSLSTRS. The segment at 1–30 is disordered; that stretch reads MFARSFSNASRTIARRSLSTRSGPAPSSLW. At 19–34 the chain is on the mitochondrial matrix side; sequence STRSGPAPSSLWSSRN. The helical; Signal-anchor for type II membrane protein transmembrane segment at 35–51 threads the bilayer; that stretch reads AVIAGTTLAITALAVTS. The Mitochondrial intermembrane portion of the chain corresponds to 52-242; sequence ERRKVFNESA…EETAAPAAAP (191 aa). A disordered region spans residues 58–111; sequence NESAQKATSPRDSIIAQDSLKENVHKKSVRQDEFSGESTKPEASTSSDSVEKAA. Over residues 59–68 the composition is skewed to polar residues; the sequence is ESAQKATSPR. Positions 76-90 are enriched in basic and acidic residues; that stretch reads SLKENVHKKSVRQDE. A compositionally biased stretch (polar residues) spans 93–105; sequence GESTKPEASTSSD. 3 cysteine pairs are disulfide-bonded: Cys144/Cys146, Cys155/Cys188, and Cys165/Cys178. The 45-residue stretch at 152 to 196 folds into the CHCH domain; that stretch reads TGPCGEQFKAAFSCFVYSEAEPKGVDCVELFKVMQDCFREHPEIY. Short sequence motifs (cx9C motif) lie at residues 155–165 and 178–188; these read CGEQFKAAFSC and CVELFKVMQDC. The interval 215 to 242 is disordered; that stretch reads DEAPPQEGTMEEKVEAAKEETAAPAAAP. Positions 224–235 are enriched in basic and acidic residues; that stretch reads MEEKVEAAKEET.

Monomer. It depends on Cu(2+) as a cofactor. Requires Zn(2+) as cofactor.

The protein localises to the mitochondrion inner membrane. Its function is as follows. Required for the import and folding of small cysteine-containing proteins (small Tim) in the mitochondrial intermembrane space (IMS). Forms a redox cycle with ERV1 that involves a disulfide relay system. Precursor proteins to be imported into the IMS are translocated in their reduced form into the mitochondria. The oxidized form of MIA40 forms a transient intermolecular disulfide bridge with the reduced precursor protein, resulting in oxidation of the precursor protein that now contains an intramolecular disulfide bond and is able to undergo folding in the IMS. This Cryptococcus neoformans var. neoformans serotype D (strain B-3501A) (Filobasidiella neoformans) protein is Mitochondrial intermembrane space import and assembly protein 40 (MIA40).